Here is an 816-residue protein sequence, read N- to C-terminus: Oxysterol-binding protein-related protein 1D (816 aa).

The PH domain occupies Gly-92 to Asp-229. Residues Lys-290–Ser-321 adopt a coiled-coil conformation. The tract at residues Ser-340 to Asp-362 is disordered. Acidic residues predominate over residues Ser-344–Asp-362. A coiled-coil region spans residues Asn-735–Lys-764.

It belongs to the OSBP family. Expressed in roots, leaves, stems and flowers.

May be involved in the transport of sterols. The chain is Oxysterol-binding protein-related protein 1D (ORP1D) from Arabidopsis thaliana (Mouse-ear cress).